A 971-amino-acid chain; its full sequence is Exportin-2 (971 aa).

The Importin N-terminal domain maps to alanine 29–arginine 102.

The protein belongs to the XPO2/CSE1 family.

It is found in the cytoplasm. The protein localises to the nucleus. Its function is as follows. Export receptor for importin alpha. Mediates importin-alpha re-export from the nucleus to the cytoplasm after import substrates have been released into the nucleoplasm. The protein is Exportin-2 (cse1l) of Xenopus laevis (African clawed frog).